A 448-amino-acid chain; its full sequence is Divalent metal cation transporter MntH (448 aa).

The next 11 helical transmembrane spans lie at Leu41–Trp61, Ser69–Leu89, Gly117–Ile137, Phe147–Phe167, Ile176–Val196, Ile215–Pro235, Phe270–Phe290, Leu307–Ala327, Val363–Glu383, Leu384–Val404, and Ile424–Thr444.

Belongs to the NRAMP family.

It localises to the cell membrane. H(+)-stimulated, divalent metal cation uptake system. The chain is Divalent metal cation transporter MntH from Listeria welshimeri serovar 6b (strain ATCC 35897 / DSM 20650 / CCUG 15529 / CIP 8149 / NCTC 11857 / SLCC 5334 / V8).